The following is a 343-amino-acid chain: Small ribosomal subunit biogenesis GTPase RsgA (343 aa).

The region spanning 116–275 (RGQLKPVAAN…LIDSPGIREF (160 aa)) is the CP-type G domain. GTP is bound by residues 163–166 (NKAD) and 217–225 (GQSGVGKSS). Zn(2+)-binding residues include Cys-299, Cys-304, His-306, and Cys-312.

Belongs to the TRAFAC class YlqF/YawG GTPase family. RsgA subfamily. In terms of assembly, monomer. Associates with 30S ribosomal subunit, binds 16S rRNA. Zn(2+) serves as cofactor.

It is found in the cytoplasm. In terms of biological role, one of several proteins that assist in the late maturation steps of the functional core of the 30S ribosomal subunit. Helps release RbfA from mature subunits. May play a role in the assembly of ribosomal proteins into the subunit. Circularly permuted GTPase that catalyzes slow GTP hydrolysis, GTPase activity is stimulated by the 30S ribosomal subunit. The polypeptide is Small ribosomal subunit biogenesis GTPase RsgA (Pseudomonas savastanoi pv. phaseolicola (strain 1448A / Race 6) (Pseudomonas syringae pv. phaseolicola (strain 1448A / Race 6))).